The primary structure comprises 346 residues: UDP-3-O-acylglucosamine N-acyltransferase (346 aa).

The Proton acceptor role is filled by histidine 240.

Belongs to the transferase hexapeptide repeat family. LpxD subfamily. As to quaternary structure, homotrimer.

It carries out the reaction a UDP-3-O-[(3R)-3-hydroxyacyl]-alpha-D-glucosamine + a (3R)-hydroxyacyl-[ACP] = a UDP-2-N,3-O-bis[(3R)-3-hydroxyacyl]-alpha-D-glucosamine + holo-[ACP] + H(+). The protein operates within bacterial outer membrane biogenesis; LPS lipid A biosynthesis. Its function is as follows. Catalyzes the N-acylation of UDP-3-O-acylglucosamine using 3-hydroxyacyl-ACP as the acyl donor. Is involved in the biosynthesis of lipid A, a phosphorylated glycolipid that anchors the lipopolysaccharide to the outer membrane of the cell. This is UDP-3-O-acylglucosamine N-acyltransferase from Bacteroides fragilis (strain YCH46).